The following is a 143-amino-acid chain: Transcriptional regulator SlyA (143 aa).

The HTH marR-type domain occupies 2–135 (ESTLGSDLAR…LSGLIDKLEK (134 aa)). Residues 49–72 (QIQLAKAIGIEQPSLVRTLDQLEE) constitute a DNA-binding region (H-T-H motif).

This sequence belongs to the SlyA family. Homodimer.

Transcription regulator that can specifically activate or repress expression of target genes. In Yersinia pestis (strain Pestoides F), this protein is Transcriptional regulator SlyA.